We begin with the raw amino-acid sequence, 188 residues long: Ribosome-recycling factor (188 aa).

This sequence belongs to the RRF family.

It localises to the cytoplasm. In terms of biological role, responsible for the release of ribosomes from messenger RNA at the termination of protein biosynthesis. May increase the efficiency of translation by recycling ribosomes from one round of translation to another. The polypeptide is Ribosome-recycling factor (Anaeromyxobacter dehalogenans (strain 2CP-C)).